A 267-amino-acid chain; its full sequence is Tryptophan synthase alpha chain (267 aa).

Active-site proton acceptor residues include Glu47 and Asp58.

It belongs to the TrpA family. Tetramer of two alpha and two beta chains.

It carries out the reaction (1S,2R)-1-C-(indol-3-yl)glycerol 3-phosphate + L-serine = D-glyceraldehyde 3-phosphate + L-tryptophan + H2O. It functions in the pathway amino-acid biosynthesis; L-tryptophan biosynthesis; L-tryptophan from chorismate: step 5/5. Functionally, the alpha subunit is responsible for the aldol cleavage of indoleglycerol phosphate to indole and glyceraldehyde 3-phosphate. The protein is Tryptophan synthase alpha chain of Chlorobium limicola (strain DSM 245 / NBRC 103803 / 6330).